The primary structure comprises 219 residues: Large ribosomal subunit protein uL4 (219 aa).

The segment at 43–100 (AAKRQGTHSTKTRGEVSGGGKKPYRQKGTGRARQGSTRAPQFTGGGTVHGPQPRDYSQ) is disordered.

Belongs to the universal ribosomal protein uL4 family. In terms of assembly, part of the 50S ribosomal subunit.

Its function is as follows. One of the primary rRNA binding proteins, this protein initially binds near the 5'-end of the 23S rRNA. It is important during the early stages of 50S assembly. It makes multiple contacts with different domains of the 23S rRNA in the assembled 50S subunit and ribosome. Forms part of the polypeptide exit tunnel. The protein is Large ribosomal subunit protein uL4 of Mycobacterium sp. (strain JLS).